Reading from the N-terminus, the 213-residue chain is Uridine kinase (213 aa).

15–22 (GASASGKS) is a binding site for ATP.

This sequence belongs to the uridine kinase family.

The protein localises to the cytoplasm. The catalysed reaction is uridine + ATP = UMP + ADP + H(+). It catalyses the reaction cytidine + ATP = CMP + ADP + H(+). It participates in pyrimidine metabolism; CTP biosynthesis via salvage pathway; CTP from cytidine: step 1/3. Its pathway is pyrimidine metabolism; UMP biosynthesis via salvage pathway; UMP from uridine: step 1/1. This is Uridine kinase from Yersinia pseudotuberculosis serotype O:1b (strain IP 31758).